The following is an 856-amino-acid chain: Leucine--tRNA ligase (856 aa).

The short motif at 53–63 is the 'HIGH' region element; sequence PYPSGNLHMGH. Residues 622–626 carry the 'KMSKS' region motif; the sequence is KMSKS. Lys625 lines the ATP pocket.

Belongs to the class-I aminoacyl-tRNA synthetase family.

The protein localises to the cytoplasm. The catalysed reaction is tRNA(Leu) + L-leucine + ATP = L-leucyl-tRNA(Leu) + AMP + diphosphate. This Prochlorococcus marinus (strain MIT 9312) protein is Leucine--tRNA ligase.